The chain runs to 251 residues: Core protein VP8 (251 aa).

Residues 1–32 (MSLLLENLIEEDTIFFAGSISEYDDLQMVIAG) constitute a propeptide, removed by core protease OPG083/I7.

The protein belongs to the orthopoxvirus OPG098 family. Post-translationally, undergoes morphogenesis-associated proteolysis which cleaves the 28 kDa to a 25-kDa product. Proteolytic cleavage of major core proteins P4a (OPG136), P4b (OPG129), and VP8 (OPG098), which occurs at a late stage of core formation, is required for production of infectious mature virions (MV).

The protein resides in the virion. It localises to the host cytoplasm. Major core structural protein. This chain is Core protein VP8 (OPG098), found in Vaccinia virus (strain Copenhagen) (VACV).